The sequence spans 670 residues: FAD-binding monooxygenase ausC (670 aa).

FAD is bound by residues 144–147 (TWYW), 156–157 (DT), and Tyr-162. 154 to 156 (MCD) is an NADP(+) binding site. Residues 299–305 (TGASAVQ) and 322–323 (RT) contribute to the NADP(+) site.

The protein belongs to the FAD-binding monooxygenase family. Requires FAD as cofactor.

It catalyses the reaction preaustinoid A + AH2 + O2 = preaustinoid A1 + A + H2O. Its pathway is secondary metabolite biosynthesis; terpenoid biosynthesis. In terms of biological role, FAD-binding monooxygenase; part of the gene cluster that mediates the biosynthesis of calidodehydroaustin, a fungal meroterpenoid. The first step of the pathway is the synthesis of 3,5-dimethylorsellinic acid by the polyketide synthase ausA. 3,5-dimethylorsellinic acid is then prenylated by the polyprenyl transferase ausN. Further epoxidation by the FAD-dependent monooxygenase ausM and cyclization by the probable terpene cyclase ausL lead to the formation of protoaustinoid A. Protoaustinoid A is then oxidized to spiro-lactone preaustinoid A3 by the combined action of the FAD-binding monooxygenases ausB and ausC, and the dioxygenase ausE. Acid-catalyzed keto-rearrangement and ring contraction of the tetraketide portion of preaustinoid A3 by ausJ lead to the formation of preaustinoid A4. The aldo-keto reductase ausK, with the help of ausH, is involved in the next step by transforming preaustinoid A4 into isoaustinone which is in turn hydroxylated by the P450 monooxygenase ausI to form austinolide. The cytochrome P450 monooxygenase ausG modifies austinolide to austinol. Austinol is further acetylated to austin by the O-acetyltransferase ausP, which spontaneously changes to dehydroaustin. The cytochrome P450 monooxygenase ausR then converts dehydroaustin is into 7-dehydrodehydroaustin. The hydroxylation catalyzed by ausR permits the O-acetyltransferase ausQ to add an additional acetyl group to the molecule, leading to the formation of acetoxydehydroaustin. The short chain dehydrogenase ausT catalyzes the reduction of the double bond present between carbon atoms 1 and 2 to convert 7-dehydrodehydroaustin into 1,2-dihydro-7-hydroxydehydroaustin. AusQ catalyzes not only an acetylation reaction but also the addition of the PKS ausV diketide product to 1,2-dihydro-7-hydroxydehydroaustin, forming precalidodehydroaustin. Finally, the iron/alpha-ketoglutarate-dependent dioxygenase converts precalidodehydroaustin into calidodehydroaustin. This chain is FAD-binding monooxygenase ausC, found in Aspergillus calidoustus.